The chain runs to 430 residues: Adenylosuccinate synthetase (430 aa).

GTP contacts are provided by residues 13 to 19 (GDEGKGK) and 41 to 43 (GHT). D14 serves as the catalytic Proton acceptor. 2 residues coordinate Mg(2+): D14 and G41. IMP-binding positions include 14–17 (DEGK), 39–42 (NAGH), T130, R144, Q225, T240, and R304. Residue H42 is the Proton donor of the active site. Position 300-306 (300-306 (ASTGRPR)) interacts with substrate. GTP-binding positions include R306, 332–334 (KLD), and 414–416 (STG).

It belongs to the adenylosuccinate synthetase family. As to quaternary structure, homodimer. Mg(2+) serves as cofactor.

It is found in the cytoplasm. It catalyses the reaction IMP + L-aspartate + GTP = N(6)-(1,2-dicarboxyethyl)-AMP + GDP + phosphate + 2 H(+). Its pathway is purine metabolism; AMP biosynthesis via de novo pathway; AMP from IMP: step 1/2. Plays an important role in the de novo pathway of purine nucleotide biosynthesis. Catalyzes the first committed step in the biosynthesis of AMP from IMP. In Xylella fastidiosa (strain M12), this protein is Adenylosuccinate synthetase.